The chain runs to 260 residues: Thiamine thiazole synthase (260 aa).

NAD(+)-binding positions include Ala36, Glu55 to Gln56, Gly63, and His154 to Asp156. Fe cation contacts are provided by Asp156 and His171. Met224 is an NAD(+) binding site. Glycine is bound at residue Arg234.

Belongs to the THI4 family. In terms of assembly, homooctamer; tetramer of dimers. The cofactor is Fe(2+).

It catalyses the reaction hydrogen sulfide + glycine + NAD(+) = ADP-5-ethyl-4-methylthiazole-2-carboxylate + nicotinamide + 3 H2O + H(+). It functions in the pathway cofactor biosynthesis; thiamine diphosphate biosynthesis. Involved in the biosynthesis of the thiazole moiety of thiamine. Catalyzes the conversion of NAD and glycine to adenosine diphosphate 5-(2-hydroxyethyl)-4-methylthiazole-2-carboxylate (ADT), an adenylated thiazole intermediate, using free sulfide as a source of sulfur. This chain is Thiamine thiazole synthase, found in Methanosarcina acetivorans (strain ATCC 35395 / DSM 2834 / JCM 12185 / C2A).